Reading from the N-terminus, the 291-residue chain is uncharacterized protein (291 aa).

Residues 5–19 and Thr-97 contribute to the NAD(+) site; that span reads AFIG…MAGH. Residue Lys-172 is part of the active site. Lys-240 provides a ligand contact to NAD(+).

The protein belongs to the HIBADH-related family.

This is an uncharacterized protein from Shewanella frigidimarina (strain NCIMB 400).